The chain runs to 828 residues: MKLSRRHFMKANAVAAAAAVAGITIPIAVRAATEQSDAIHWDKAPCRFCGVGCGVLVGTQNGRIVASQGDPEAPVNRGLNCIKGYFLPKIMYGQDRLTQPLLRMRNGQFDKEGEFTPISWDKAFDIMAEKFKTALKEKGPNAIGMFGSGQSTIWEGYASAKLFKAGFRSNNIDPNARHCMASAVVGFMRTFGMDEPMGCYDDIEQTDAFVLWGSNMAEMHPILWSRITDRRLSNSNVTVAVLSTYQHRSFELADNGMVFTPQTDLAILNYIANYIIQNNAVNEAFFTRHVNLRRGVTDIGYGLRPTHPLEKAAKNPGSDASEPMSFEEYKAFVADYTLEKTVAISGVPADQLEALAKLYADPKKKVISYWTMGFNQHTRGVWANNLVYNIHLLTGKISQPGCGPFSLTGQPSACGTAREVGTFAHRLPADMVVTNEKHRAIAEKLWQLPTGTIPEKIGLHAVAQDRALKDGTLNAYWVMCNNNMQAGPNINQERMPGWRDPRNFIVVSDPYPTISALAADLILPTAMWVEKEGAYGNAERRTQFWRQQVKAPGESKSDLWQVVSFAKRFTVEDVWPEELLAQKPAYRGKTLYDVLFANDVTTRFPLSELAENQLNDESREFGFYLQKGLFEEYAAFGRGHGHDLAPFDAYHKVRGLRWPVVDGKETQWRYSEGHDPYVKAGEAYRFYGKPDGKAVIFALPYEPAAEAPDEEYDLWFSTGRVLEHWHTGSMTRRVPELHRAFPEAVLFIHPQDAKARDLRRGEKVRIISRRGEVISVVETRGRNKPPRGLVYMPFFDAAQMTNVLTLDATDPLSKETDFKKCAVKLAKV.

Positions 1 to 31 form a signal peptide, tat-type signal; sequence MKLSRRHFMKANAVAAAAAVAGITIPIAVRA. A 4Fe-4S Mo/W bis-MGD-type domain is found at 39 to 95; it reads IHWDKAPCRFCGVGCGVLVGTQNGRIVASQGDPEAPVNRGLNCIKGYFLPKIMYGQD. Residues cysteine 46, cysteine 49, cysteine 53, and cysteine 81 each contribute to the [4Fe-4S] cluster site. Residues lysine 83, glutamine 150, asparagine 175, cysteine 179, 212-219, 243-247, 262-264, methionine 372, glutamine 376, asparagine 482, 508-509, lysine 531, aspartate 558, and 718-727 contribute to the Mo-bis(molybdopterin guanine dinucleotide) site; these read WGSNMAEM, STYQH, QTD, SD, and TGRVLEHWHT. Residue phenylalanine 794 participates in substrate binding. Mo-bis(molybdopterin guanine dinucleotide)-binding residues include asparagine 802 and lysine 819.

Belongs to the prokaryotic molybdopterin-containing oxidoreductase family. NasA/NapA/NarB subfamily. In terms of assembly, component of the periplasmic nitrate reductase NapAB complex composed of NapA and NapB. The cofactor is [4Fe-4S] cluster. Mo-bis(molybdopterin guanine dinucleotide) serves as cofactor. Predicted to be exported by the Tat system. The position of the signal peptide cleavage has not been experimentally proven.

Its subcellular location is the periplasm. The enzyme catalyses 2 Fe(II)-[cytochrome] + nitrate + 2 H(+) = 2 Fe(III)-[cytochrome] + nitrite + H2O. Functionally, catalytic subunit of the periplasmic nitrate reductase complex NapAB. Receives electrons from NapB and catalyzes the reduction of nitrate to nitrite. This Pectobacterium atrosepticum (strain SCRI 1043 / ATCC BAA-672) (Erwinia carotovora subsp. atroseptica) protein is Periplasmic nitrate reductase.